The primary structure comprises 291 residues: Probable plasmid-partitioning protein ParB (291 aa).

Belongs to the ParB family.

This Deinococcus radiodurans (strain ATCC 13939 / DSM 20539 / JCM 16871 / CCUG 27074 / LMG 4051 / NBRC 15346 / NCIMB 9279 / VKM B-1422 / R1) protein is Probable plasmid-partitioning protein ParB.